A 250-amino-acid polypeptide reads, in one-letter code: DNA repair protein RecO (250 aa).

This sequence belongs to the RecO family.

In terms of biological role, involved in DNA repair and RecF pathway recombination. The sequence is that of DNA repair protein RecO from Lactobacillus helveticus (strain DPC 4571).